The primary structure comprises 293 residues: 4-hydroxybenzoate octaprenyltransferase (293 aa).

Transmembrane regions (helical) follow at residues 26–48 (PIGT…GGMP), 98–118 (TEAK…DLLL), 122–142 (TFLL…MKRF), 145–165 (LPQV…YGAV), 167–187 (ESLP…TVAY), 218–238 (IIAL…WISQ), 241–261 (WGYF…CWLT), and 272–292 (AFLN…VGIY).

This sequence belongs to the UbiA prenyltransferase family. Mg(2+) serves as cofactor.

Its subcellular location is the cell inner membrane. The enzyme catalyses all-trans-octaprenyl diphosphate + 4-hydroxybenzoate = 4-hydroxy-3-(all-trans-octaprenyl)benzoate + diphosphate. Its pathway is cofactor biosynthesis; ubiquinone biosynthesis. Functionally, catalyzes the prenylation of para-hydroxybenzoate (PHB) with an all-trans polyprenyl group. Mediates the second step in the final reaction sequence of ubiquinone-8 (UQ-8) biosynthesis, which is the condensation of the polyisoprenoid side chain with PHB, generating the first membrane-bound Q intermediate 3-octaprenyl-4-hydroxybenzoate. The protein is 4-hydroxybenzoate octaprenyltransferase of Actinobacillus pleuropneumoniae serotype 3 (strain JL03).